Consider the following 305-residue polypeptide: Glycine--tRNA ligase alpha subunit (305 aa).

The protein belongs to the class-II aminoacyl-tRNA synthetase family. As to quaternary structure, tetramer of two alpha and two beta subunits.

Its subcellular location is the cytoplasm. It carries out the reaction tRNA(Gly) + glycine + ATP = glycyl-tRNA(Gly) + AMP + diphosphate. The sequence is that of Glycine--tRNA ligase alpha subunit from Vibrio vulnificus (strain CMCP6).